The sequence spans 306 residues: Pantothenate kinase (306 aa).

ATP is bound at residue 91-98 (GSVAVGKS).

The protein belongs to the prokaryotic pantothenate kinase family.

The protein localises to the cytoplasm. The enzyme catalyses (R)-pantothenate + ATP = (R)-4'-phosphopantothenate + ADP + H(+). The protein operates within cofactor biosynthesis; coenzyme A biosynthesis; CoA from (R)-pantothenate: step 1/5. This chain is Pantothenate kinase, found in Streptococcus equi subsp. zooepidemicus (strain H70).